A 180-amino-acid chain; its full sequence is Inner membrane-spanning protein YciB (180 aa).

Helical transmembrane passes span 22–42 (IFVASGALIVATLLALAFTWF), 50–70 (MTLVTAIMVLVFGTLTLAFHS), 72–92 (LFIKWKVTVLYVLFAVALLVS), 121–141 (MSWAVFFLVCGLLNIYVAFWL), and 149–169 (FKVFGLTALTLVFTLISGVYI).

Belongs to the YciB family.

The protein localises to the cell inner membrane. In terms of biological role, plays a role in cell envelope biogenesis, maintenance of cell envelope integrity and membrane homeostasis. The protein is Inner membrane-spanning protein YciB of Yersinia enterocolitica serotype O:8 / biotype 1B (strain NCTC 13174 / 8081).